The sequence spans 356 residues: Leucine carboxyl methyltransferase 1 (356 aa).

S-adenosyl-L-methionine-binding positions include Arg78, Gly101, Asp127, 183–184 (DL), and Glu218.

The protein belongs to the methyltransferase superfamily. LCMT family.

The enzyme catalyses [phosphatase 2A protein]-C-terminal L-leucine + S-adenosyl-L-methionine = [phosphatase 2A protein]-C-terminal L-leucine methyl ester + S-adenosyl-L-homocysteine. Functionally, methylates the carboxyl group of the C-terminal leucine residue of protein phosphatase 2A catalytic subunits to form alpha-leucine ester residues. This Cryptococcus neoformans var. neoformans serotype D (strain JEC21 / ATCC MYA-565) (Filobasidiella neoformans) protein is Leucine carboxyl methyltransferase 1 (PPM1).